The primary structure comprises 249 residues: MILELDCGNSFIKWRITAKNDAAVISGGVVGSDAALLMHLSNLPDTSFTDCRLVSVRSAEETARLVSLLADTFSVAPVCAEPAQELAGVINGYDDFARLGLDRWLAFVGAYHLARSACLVIDLGTAVTSDFVDAGGAHLGGFICPGMPLMRNQLRTHTRRIRYDDTEAEKALARLVPGRATAEAVERGCSLMLRGFALTQIEIAQGYWGNDFAIFVTGGDAALVADVLPGARIVPDLVFVGLALACPLR.

6–13 (DCGNSFIK) is a binding site for ATP. Substrate is bound by residues Tyr-93 and 100–103 (GLDR). Catalysis depends on Asp-102, which acts as the Proton acceptor. Asp-122 provides a ligand contact to K(+). Thr-125 is an ATP binding site. Thr-181 is a substrate binding site.

It belongs to the type III pantothenate kinase family. Homodimer. It depends on NH4(+) as a cofactor. The cofactor is K(+).

Its subcellular location is the cytoplasm. It carries out the reaction (R)-pantothenate + ATP = (R)-4'-phosphopantothenate + ADP + H(+). It functions in the pathway cofactor biosynthesis; coenzyme A biosynthesis; CoA from (R)-pantothenate: step 1/5. In terms of biological role, catalyzes the phosphorylation of pantothenate (Pan), the first step in CoA biosynthesis. This chain is Type III pantothenate kinase, found in Pseudomonas savastanoi pv. phaseolicola (strain 1448A / Race 6) (Pseudomonas syringae pv. phaseolicola (strain 1448A / Race 6)).